A 124-amino-acid polypeptide reads, in one-letter code: MPTVKQLIRNARQPIRNARKSAALKGCPQRRGTCARVYTINPKKPNSALRKVARVRLTSGFEITAYIPGIGHNLQEHSVVLVRGGRVKDLPGVRYRIIRGALDAVAVKNRQQGRSKYGVKKPKK.

This sequence belongs to the universal ribosomal protein uS12 family. As to quaternary structure, part of the 30S ribosomal subunit.

The protein resides in the plastid. Its subcellular location is the chloroplast. Its function is as follows. With S4 and S5 plays an important role in translational accuracy. Located at the interface of the 30S and 50S subunits. The chain is Small ribosomal subunit protein uS12c (rps12) from Oryza nivara (Indian wild rice).